The sequence spans 530 residues: Synembryn-like chaperone C3E7.04c (530 aa).

The chain crosses the membrane as a helical span at residues 492–512 (SFIYHCYHSFVGPIHILLLMF).

The protein belongs to the synembryn family.

It is found in the membrane. Functionally, chaperone that specifically binds and folds some, but not all, nascent G alpha proteins prior to G protein heterotrimer formation, promoting their stability and activity. Also acts as a guanine nucleotide exchange factor (GEF) for G alpha proteins by stimulating exchange of bound GDP for free GTP. This Schizosaccharomyces pombe (strain 972 / ATCC 24843) (Fission yeast) protein is Synembryn-like chaperone C3E7.04c.